A 349-amino-acid polypeptide reads, in one-letter code: Protein Wnt-7b (349 aa).

Positions 1–24 (MHRNFRKWIFYVFLCFGVLYVKLG) are cleaved as a signal peptide. Disulfide bonds link C73–C84, C123–C131, C133–C152, C200–C214, and C202–C209. N-linked (GlcNAc...) asparagine glycosylation is found at N83 and N127. The O-palmitoleoyl serine; by PORCN moiety is linked to residue S206. The interval 238–266 (VEVVRASRLRQPTFLRIKQLRSYQKPMET) is disordered linker. 6 disulfide bridges follow: C278/C309, C294/C304, C308/C348, C324/C339, C326/C336, and C331/C332. N-linked (GlcNAc...) asparagine glycosylation occurs at N295.

This sequence belongs to the Wnt family. As to quaternary structure, forms a soluble 1:1 complex with AFM; this prevents oligomerization and is required for prolonged biological activity. The complex with AFM may represent the physiological form in body fluids. Interacts with FZD1 and FZD10. Interacts with FZD4 (in vitro). Interacts with PORCN. Interacts with glypican GPC3. Interacts (via intrinsically disordered linker region) with RECK; interaction with RECK confers ligand selectivity for Wnt7 in brain endothelial cells and allows these cells to selectively respond to Wnt7. In terms of processing, palmitoleoylation is required for efficient binding to frizzled receptors. Depalmitoleoylation leads to Wnt signaling pathway inhibition.

It localises to the secreted. The protein resides in the extracellular space. The protein localises to the extracellular matrix. Ligand for members of the frizzled family of seven transmembrane receptors that functions in the canonical Wnt/beta-catenin signaling pathway. Required for normal fusion of the chorion and the allantois during placenta development. Required for central nervous system (CNS) angiogenesis and blood-brain barrier regulation. This is Protein Wnt-7b (Wnt7b) from Mus musculus (Mouse).